The sequence spans 154 residues: Large ribosomal subunit protein uL30 (154 aa).

This sequence belongs to the universal ribosomal protein uL30 family. As to quaternary structure, part of the 50S ribosomal subunit.

The polypeptide is Large ribosomal subunit protein uL30 (Methanococcus maripaludis (strain DSM 14266 / JCM 13030 / NBRC 101832 / S2 / LL)).